Consider the following 359-residue polypeptide: 4-galactosyl-N-acetylglucosaminide 3-alpha-L-fucosyltransferase FUT6 (359 aa).

The Cytoplasmic segment spans residues 1–14 (MDPLGPAKTQWSWR). Residues 15–34 (CCLTALLFQLLVAVCFFSYL) traverse the membrane as a helical; Signal-anchor for type II membrane protein segment. The Lumenal portion of the chain corresponds to 35 to 359 (RVSRDDPTVY…QTRSIAAWFT (325 aa)). Residues 73–112 (KPIALPRCSEMVPGTADCNITADRKVYPQADAVIVHHREV) form a determines site-specific fucosylation region. N-linked (GlcNAc...) asparagine glycosylation is found at asparagine 91, asparagine 153, and asparagine 184.

It belongs to the glycosyltransferase 10 family. As to quaternary structure, homodimer and monomer. Monomer (secreted form). In terms of processing, N-glycosylated. Proteolytic cleavage releases a secreted glycoform of 43 kDa.

Its subcellular location is the golgi apparatus. It localises to the golgi stack membrane. The protein localises to the secreted. The enzyme catalyses a beta-D-galactosyl-(1-&gt;4)-N-acetyl-beta-D-glucosaminyl derivative + GDP-beta-L-fucose = a beta-D-galactosyl-(1-&gt;4)-[alpha-L-fucosyl-(1-&gt;3)]-N-acetyl-beta-D-glucosaminyl derivative + GDP + H(+). It catalyses the reaction an N-acetyl-alpha-neuraminyl-(2-&gt;3)-beta-D-galactosyl-(1-&gt;4)-N-acetyl-beta-D-glucosaminyl derivative + GDP-beta-L-fucose = an alpha-Neu5Ac-(2-&gt;3)-beta-D-Gal-(1-&gt;4)-[alpha-L-Fuc-(1-&gt;3)]-beta-D-GlcNAc derivative + GDP + H(+). It carries out the reaction an alpha-Neu5Ac-(2-&gt;3)-beta-D-Gal-(1-&gt;4)-beta-D-GlcNAc-(1-&gt;3)-beta-D-Gal-(1-&gt;4)-[alpha-L-Fuc-(1-&gt;3)]-beta-D-GlcNAc derivative + GDP-beta-L-fucose = an alpha-Neu5Ac-(2-&gt;3)-beta-D-Gal-(1-&gt;4)-[alpha-L-Fuc-(1-&gt;3)]-beta-D-GlcNAc-(1-&gt;3)-beta-D-Gal-(1-&gt;4)-[alpha-L-Fuc-(1-&gt;3)]-beta-D-GlcNAc derivative + GDP + H(+). The catalysed reaction is a neolactoside nLc6Cer + GDP-beta-L-fucose = beta-D-Gal-(1-&gt;4)-[alpha-L-Fuc-(1-&gt;3)]-beta-D-GlcNAc-(1-&gt;3)-beta-D-Gal-(1-&gt;4)-beta-D-GlcNAc-(1-&gt;3)-beta-D-Gal-(1-&gt;4)-beta-D-Glc-(1&lt;-&gt;1')-Cer + GDP + H(+). The enzyme catalyses a neolactoside nLc6Cer + GDP-beta-L-fucose = beta-D-galactosyl-(1-&gt;4)-N-acetyl-beta-D-glucosaminyl-(1-&gt;3)-beta-D-galactosyl-(1-&gt;4)-[alpha-L-fucosyl-(1-&gt;3)]-N-acetyl-beta-D-glucosaminyl-(1-&gt;3)-beta-D-galactosyl-(1-&gt;4)-beta-D-glucosyl-(1&lt;-&gt;1')-ceramide + GDP + H(+). It catalyses the reaction a neolactoside VI(3)-alpha-NeuNAc-nLc6Cer + GDP-beta-L-fucose = a neolactoside VI(3)-alpha-NeuAc,V(3)-alphaFuc-nLc6Cer + GDP + H(+). It carries out the reaction beta-D-galactosyl-(1-&gt;4)-N-acetyl-D-glucosamine + GDP-beta-L-fucose = beta-D-galactosyl-(1-&gt;4)-[alpha-L-fucosyl-(1-&gt;3)]-N-acetyl-D-glucosamine + GDP + H(+). The catalysed reaction is N-acetyl-alpha-neuraminosyl-(2-&gt;3)-beta-D-galactosyl-(1-&gt;4)-N-acetyl-beta-D-glucosamine + GDP-beta-L-fucose = N-acetyl-alpha-neuraminosyl-(2-&gt;3)-beta-D-galactosyl-(1-&gt;4)-[alpha-L-fucosyl-(1-&gt;3)]-N-acetyl-beta-D-glucosamine + GDP + H(+). The enzyme catalyses lactose + GDP-beta-L-fucose = beta-D-galactosyl-(1-&gt;4)-[alpha-L-fucosyl-(1-&gt;3)]-D-glucose + GDP + H(+). It catalyses the reaction alpha-L-Fuc-(1-&gt;2)-beta-D-Gal-(1-&gt;4)-D-Glc + GDP-beta-L-fucose = alpha-L-Fuc-(1-&gt;2)-beta-D-Gal-(1-&gt;4)-[alpha-L-Fuc-(1-&gt;3)]-D-Glc + GDP + H(+). It carries out the reaction a beta-D-galactosyl-(1-&gt;4)-N-acetyl-beta-D-6-sulfooxy-glucosaminyl derivative + GDP-beta-L-fucose = a beta-D-galactosyl-(1-&gt;4)-[alpha-L-fucosyl-(1-&gt;3)]-N-acetyl-beta-D-6-sulfooxy-glucosaminyl derivative + GDP + H(+). It functions in the pathway protein modification; protein glycosylation. Catalyzes the transfer of L-fucose, from a guanosine diphosphate-beta-L-fucose, to the N-acetyl glucosamine (GlcNAc) of a distal alpha2,3 sialylated lactosamine unit of a glycoprotein- or glycolipid-linked sialopolylactosamines chain or of a distal or internal lactosamine unit of a neutral glycoprotein- or glycolipid-linked polylactosamines chain through an alpha-1,3 glycosidic linkage and participates in surface expression of the sialyl Lewis X (sLe(x)), Lewis X (Le(x)) and non sialylated VIM2 determinants. Moreover transfers fucose to H-type 2 (Fucalpha1-2Galbeta1-4GlcNAc) chain acceptor substrates and participates in difucosylated sialyl Lewis x determinants. Also fucosylates a polylactosamine substrate having a 6 sulfate modification at the GlcNAc moiety and gives rise to sialyl and non-sialyl 6-sulfo lewis X. Does not have activity towards type 1 ((Galbeta1-3GlcNAc)) and H-type 1 chain (Fucalpha1-2Galbeta1-3GlcNAc) acceptors substrates. The chain is 4-galactosyl-N-acetylglucosaminide 3-alpha-L-fucosyltransferase FUT6 from Pongo pygmaeus (Bornean orangutan).